Reading from the N-terminus, the 285-residue chain is UPF0354 protein SA1564 (285 aa).

The protein belongs to the UPF0354 family.

The protein is UPF0354 protein SA1564 of Staphylococcus aureus (strain N315).